The chain runs to 400 residues: Betaine--homocysteine S-methyltransferase 1 (400 aa).

A Hcy-binding domain is found at 8 to 309 (RGVLERLNAG…YHIRAVAEEL (302 aa)). Positions 212, 294, and 295 each coordinate Zn(2+).

In terms of assembly, homotetramer. Zn(2+) is required as a cofactor.

Its subcellular location is the cytoplasm. The enzyme catalyses L-homocysteine + glycine betaine = N,N-dimethylglycine + L-methionine. Its pathway is amine and polyamine degradation; betaine degradation; sarcosine from betaine: step 1/2. It participates in amino-acid biosynthesis; L-methionine biosynthesis via de novo pathway; L-methionine from L-homocysteine (BhmT route): step 1/1. Its function is as follows. Involved in the regulation of homocysteine metabolism. Converts betaine and homocysteine to dimethylglycine and methionine, respectively. This reaction is also required for the irreversible oxidation of choline. In Danio rerio (Zebrafish), this protein is Betaine--homocysteine S-methyltransferase 1 (bhmt).